Consider the following 598-residue polypeptide: Elongation factor 4 (598 aa).

The 183-residue stretch at 4–186 folds into the tr-type G domain; it reads INIRNFAIIA…AIVSRLPAPS (183 aa). Residues 16-21 and 133-136 each bind GTP; these read DHGKST and NKID.

The protein belongs to the TRAFAC class translation factor GTPase superfamily. Classic translation factor GTPase family. LepA subfamily.

It localises to the cell inner membrane. It carries out the reaction GTP + H2O = GDP + phosphate + H(+). Its function is as follows. Required for accurate and efficient protein synthesis under certain stress conditions. May act as a fidelity factor of the translation reaction, by catalyzing a one-codon backward translocation of tRNAs on improperly translocated ribosomes. Back-translocation proceeds from a post-translocation (POST) complex to a pre-translocation (PRE) complex, thus giving elongation factor G a second chance to translocate the tRNAs correctly. Binds to ribosomes in a GTP-dependent manner. This chain is Elongation factor 4, found in Ehrlichia ruminantium (strain Gardel).